A 214-amino-acid chain; its full sequence is MAFDISVNASKTINALVYFSTQQNKLVIRNEVNDTHYTVEFDRDKVVDTFISYNRHNDTIEIRGVLPEETNIGCAVNTPVSMTYLYNKYSFKLILAEYIRHRNTISGNIYSALMTLDDLAIKQYGDIDLLFNEKLKVDSDSGLFDFVNFVKDMICCDSRIVVALSSLVSKHWELTNKKYRCMALANIYLIVFQYLSYLDYDTIYVSIYAGTLRA.

It belongs to the orthopoxvirus OPG176 family. Tetramer. Interacts with host MYD88, TRF4, TICAM2 and MAL.

BCL2-like protein which disrupts the host immune response by inhibiting the TLR4 signaling pathway leading to NF-kappa-B activation. Acts close to the plasma membrane and targets several host TIR-domain containing adapter proteins including MYD88, TIRAP, TRIF and TICAM2. In turn, blocks the host NF-kappa-B and TRIF-mediated IRF3 activation. The protein is Protein OPG176 (OPG176) of Homo sapiens (Human).